The following is a 138-amino-acid chain: Phospholipase A2 EC3 (138 aa).

The N-terminal stretch at 1-16 (MRTLWIVAVWLMGVEG) is a signal peptide. 7 disulfide bridges follow: C42–C131, C44–C60, C59–C111, C65–C138, C66–C104, C73–C97, and C91–C102. 3 residues coordinate Ca(2+): Y43, G45, and G47. Residue H63 is part of the active site. D64 contributes to the Ca(2+) binding site. The active site involves D105.

This sequence belongs to the phospholipase A2 family. Group II subfamily. The cofactor is Ca(2+).

It localises to the secreted. The catalysed reaction is a 1,2-diacyl-sn-glycero-3-phosphocholine + H2O = a 1-acyl-sn-glycero-3-phosphocholine + a fatty acid + H(+). PA2 catalyzes the calcium-dependent hydrolysis of the 2-acyl groups in 3-sn-phosphoglycerides. The sequence is that of Phospholipase A2 EC3 from Echis coloratus (Carpet viper).